We begin with the raw amino-acid sequence, 429 residues long: Probable E3 ubiquitin-protein ligase makorin-1 (429 aa).

3 consecutive C3H1-type zinc fingers follow at residues 18–45, 48–75, and 153–180; these read WTKH…HDLT, KPAA…HCKP, and ELRK…HGDV. The tract at residues 181–208 is makorin-type Cys-His; sequence CDMCGLQVLHPTDSSQRSEHTKACIEAH. The RING-type zinc finger occupies 226–280; the sequence is CGVCMEVVFEKANPSERRFGILSNCSHCYCLKCIRKWRSAKQFESKIIKSCPECR. The segment at 309–338 adopts a C3H1-type 4 zinc-finger fold; that stretch reads GMGRKPCRYFDEGRGICPFGANCFYKHAFP. A disordered region spans residues 343–362; the sequence is EEAQPQRRQTGSSSRNRNSR. The span at 348–358 shows a compositional bias: low complexity; that stretch reads QRRQTGSSSRN.

The catalysed reaction is S-ubiquitinyl-[E2 ubiquitin-conjugating enzyme]-L-cysteine + [acceptor protein]-L-lysine = [E2 ubiquitin-conjugating enzyme]-L-cysteine + N(6)-ubiquitinyl-[acceptor protein]-L-lysine.. It functions in the pathway protein modification; protein ubiquitination. Functionally, E3 ubiquitin ligase catalyzing the covalent attachment of ubiquitin moieties onto substrate proteins. The polypeptide is Probable E3 ubiquitin-protein ligase makorin-1 (Takifugu rubripes (Japanese pufferfish)).